We begin with the raw amino-acid sequence, 426 residues long: MEQLTLNPIGKINGEIFLPGSKSLSNRALLIAALANGVTKITNLLVSDDINHMLNALKSLGIEYTLSDCGTECTVIGNGGFFNAKKPLELYLGNAGTAMRPLCAALAASEGEFILTGEPRMKERPIGHLVDALAQLDADIEYLENKDYPPVKIKGKALTGNTVTIDGSISSQFLTAILMIAPLLETNTTIEIDGELVSKPYIDITLDIMRRFNVSVQNNDYKSFIVNGKQSYQALDKYMVEGDASSASYFLAAGAIKGGEVTVHGIGKLSVQGDKHFADVLEKMGAEIHWKDESITVIGKPLTAVDMDMNHIPDAAMTIATTALFATGTTTIRNIYNWRVKETDRLNAMATELRKVGAEVVEGKDYISITPPKSLKHAEIDTYNDHRVAMCFSLVALSDTPVTINDPKCTAKTFPDYFDKLAQVSC.

Lys-22, Ser-23, and Arg-27 together coordinate 3-phosphoshikimate. Position 22 (Lys-22) interacts with phosphoenolpyruvate. The phosphoenolpyruvate site is built by Gly-96 and Arg-124. 7 residues coordinate 3-phosphoshikimate: Ser-170, Ser-171, Gln-172, Ser-198, Asp-314, Asn-337, and Lys-341. Position 172 (Gln-172) interacts with phosphoenolpyruvate. The Proton acceptor role is filled by Asp-314. 3 residues coordinate phosphoenolpyruvate: Arg-345, Arg-387, and Lys-412.

The protein belongs to the EPSP synthase family. As to quaternary structure, monomer.

It is found in the cytoplasm. It carries out the reaction 3-phosphoshikimate + phosphoenolpyruvate = 5-O-(1-carboxyvinyl)-3-phosphoshikimate + phosphate. Its pathway is metabolic intermediate biosynthesis; chorismate biosynthesis; chorismate from D-erythrose 4-phosphate and phosphoenolpyruvate: step 6/7. In terms of biological role, catalyzes the transfer of the enolpyruvyl moiety of phosphoenolpyruvate (PEP) to the 5-hydroxyl of shikimate-3-phosphate (S3P) to produce enolpyruvyl shikimate-3-phosphate and inorganic phosphate. This chain is 3-phosphoshikimate 1-carboxyvinyltransferase, found in Colwellia psychrerythraea (strain 34H / ATCC BAA-681) (Vibrio psychroerythus).